We begin with the raw amino-acid sequence, 302 residues long: D-alanine--D-alanine ligase B (302 aa).

The 196-residue stretch at lysine 99–glutamate 294 folds into the ATP-grasp domain. Residue isoleucine 126–threonine 181 coordinates ATP. 3 residues coordinate Mg(2+): aspartate 248, glutamate 261, and asparagine 263.

This sequence belongs to the D-alanine--D-alanine ligase family. Mg(2+) is required as a cofactor. It depends on Mn(2+) as a cofactor.

The protein resides in the cytoplasm. It carries out the reaction 2 D-alanine + ATP = D-alanyl-D-alanine + ADP + phosphate + H(+). It participates in cell wall biogenesis; peptidoglycan biosynthesis. Functionally, cell wall formation. This is D-alanine--D-alanine ligase B from Clostridium perfringens (strain 13 / Type A).